Here is a 685-residue protein sequence, read N- to C-terminus: uncharacterized protein (685 aa).

Disordered stretches follow at residues 502-538 (NLNQ…SLNK) and 635-685 (RSKR…IHNA). Over residues 518 to 538 (SSENMTKFPSSRGKSTVSLNK) the composition is skewed to polar residues. Over residues 675-685 (KLKKSLIIHNA) the composition is skewed to basic residues.

This is an uncharacterized protein from Homo sapiens (Human).